Here is a 347-residue protein sequence, read N- to C-terminus: Uroporphyrinogen decarboxylase (347 aa).

Substrate-binding positions include arginine 23 to arginine 27, aspartate 73, tyrosine 150, threonine 205, and histidine 323.

Belongs to the uroporphyrinogen decarboxylase family. As to quaternary structure, homodimer.

Its subcellular location is the cytoplasm. The catalysed reaction is uroporphyrinogen III + 4 H(+) = coproporphyrinogen III + 4 CO2. The protein operates within porphyrin-containing compound metabolism; protoporphyrin-IX biosynthesis; coproporphyrinogen-III from 5-aminolevulinate: step 4/4. In terms of biological role, catalyzes the decarboxylation of four acetate groups of uroporphyrinogen-III to yield coproporphyrinogen-III. The chain is Uroporphyrinogen decarboxylase from Ruthia magnifica subsp. Calyptogena magnifica.